A 95-amino-acid chain; its full sequence is uncharacterized protein (95 aa).

The tract at residues 46 to 68 is disordered; it reads GDRGTNGRTEAEHDGIPHSRKKV.

This is an uncharacterized protein from Schizosaccharomyces pombe (strain 972 / ATCC 24843) (Fission yeast).